Reading from the N-terminus, the 286-residue chain is Serine carboxypeptidase-like (286 aa).

Ser-4 is an active-site residue. 2 disulfide bridges follow: Cys-83–Cys-98 and Cys-121–Cys-126. Residue Asp-193 is part of the active site. Cys-196 contacts substrate. N-linked (GlcNAc...) asparagine glycosylation occurs at Asn-227. Residue His-250 is part of the active site.

The protein belongs to the peptidase S10 family.

Involved in degradation of small peptides. In Pisum sativum (Garden pea), this protein is Serine carboxypeptidase-like.